Here is an 89-residue protein sequence, read N- to C-terminus: UPF0367 protein P9515_01381 (89 aa).

It belongs to the UPF0367 family.

The polypeptide is UPF0367 protein P9515_01381 (Prochlorococcus marinus (strain MIT 9515)).